Reading from the N-terminus, the 548-residue chain is MDSQRNLLIIALLFVSFMIWQAWEQDKNPQPQQQTTQTTTTAAGSAADQGVPASGQGKLITVKTDVLELTINTNGGDIEQALLLAYPKTLKSTEPFQLLETTPQFVYQAQSGLTGRDGPDNPANGPRPLYNVDKEAFVLADGQDELVIPLTYTDKAGNVFTKTFTLKRGGYAVNVGYSVQNASEKPLEVSTFGQLKQTAALPTSRDTQTGGLSTMHTFRGAAFSTADSKYEKYKFDTILDNENLNVSTKNGWVAMLQQYFTTAWVPRNNGTNNFYTANLGNGVVAIGYKSQPVLVQPGQTDKLQSTLWVGPAIQDKMAAVAPHLDLTVDYGWLWFISQPLFKLLKFIHSFLGNWGFSIIVITFIVRGIMYPLTKAQYTSMAKMRMLQPKIQAMRERLGDDKQRQSQEMMALYKAEKVNPLGGCFPLIIQMPIFLALYYMLSASVELRHAPFILWIHDLSAQDPYYILPIIMGATMFFIQKMSPTTVTDPMQQKIMTFMPVIFTVFFLWFPSGLVVYYIVSNLVTIIQQQLIYRGLEKRGLHSREKKKS.

A helical membrane pass occupies residues 6-26; it reads NLLIIALLFVSFMIWQAWEQD. A disordered region spans residues 28-52; the sequence is NPQPQQQTTQTTTTAAGSAADQGVP. Residues 29–41 are compositionally biased toward low complexity; sequence PQPQQQTTQTTTT. Transmembrane regions (helical) follow at residues 345 to 365, 420 to 440, 458 to 478, and 499 to 519; these read KFIH…TFIV, LGGC…YYML, LSAQ…MFFI, and PVIF…YYIV.

This sequence belongs to the OXA1/ALB3/YidC family. Type 1 subfamily. Interacts with the Sec translocase complex via SecD. Specifically interacts with transmembrane segments of nascent integral membrane proteins during membrane integration.

The protein resides in the cell inner membrane. Required for the insertion and/or proper folding and/or complex formation of integral membrane proteins into the membrane. Involved in integration of membrane proteins that insert both dependently and independently of the Sec translocase complex, as well as at least some lipoproteins. Aids folding of multispanning membrane proteins. This is Membrane protein insertase YidC from Klebsiella pneumoniae subsp. pneumoniae (strain ATCC 700721 / MGH 78578).